We begin with the raw amino-acid sequence, 100 residues long: A-type ATP synthase subunit F (100 aa).

It belongs to the V-ATPase F subunit family. As to quaternary structure, has multiple subunits with at least A(3), B(3), C, D, E, F, H, I and proteolipid K(x).

The protein localises to the cell membrane. In terms of biological role, component of the A-type ATP synthase that produces ATP from ADP in the presence of a proton gradient across the membrane. The sequence is that of A-type ATP synthase subunit F from Methanoregula boonei (strain DSM 21154 / JCM 14090 / 6A8).